A 535-amino-acid chain; its full sequence is Prolyl 4-hydroxylase subunit alpha-2 (535 aa).

The signal sequence occupies residues 1 to 21 (MKLWVSALLMAWFGVLSCVQA). N-linked (GlcNAc...) asparagine glycosylation occurs at N115. Residues 207 to 240 (SQVLDYLSYAVFQLGDLHRALELTRRLLSLDPSH) form a TPR repeat. A glycan (N-linked (GlcNAc...) asparagine) is linked at N264. The region spanning 412–520 (TAELLQVANY…KWVSNKWFHE (109 aa)) is the Fe2OG dioxygenase domain. The Fe cation site is built by H430 and D432. Residue K480 is modified to N6-succinyllysine. Position 501 (H501) interacts with Fe cation. K511 lines the 2-oxoglutarate pocket.

Belongs to the P4HA family. As to quaternary structure, heterotetramer of two alpha-2 chains and two beta chains (P4HB) (the beta chain is the multi-functional PDI), where P4HB plays the role of a structural subunit; this tetramer catalyzes the formation of 4-hydroxyproline in collagen. Requires Fe(2+) as cofactor. The cofactor is L-ascorbate. Expressed in the heart, placenta, lung and pancreas.

It localises to the endoplasmic reticulum lumen. It catalyses the reaction L-prolyl-[collagen] + 2-oxoglutarate + O2 = trans-4-hydroxy-L-prolyl-[collagen] + succinate + CO2. Its activity is regulated as follows. Inhibited by poly(L-proline) only at very high concentrations. Functionally, catalyzes the post-translational formation of 4-hydroxyproline in -Xaa-Pro-Gly- sequences in collagens and other proteins. This chain is Prolyl 4-hydroxylase subunit alpha-2 (P4HA2), found in Homo sapiens (Human).